Reading from the N-terminus, the 333-residue chain is Protoheme IX farnesyltransferase (333 aa).

8 helical membrane-spanning segments follow: residues 31 to 51 (VMSLVVFTGLTGLLAARAPIH), 52 to 72 (PVLAAIAVLCIAVGAGASGAL), 115 to 135 (MFLGFAVNWLAAGLLAFTIVF), 152 to 172 (IVIGGLAGALPPAIGWAAATG), 178 to 198 (AWLMVAIIFFWTPPHFWALSL), 223 to 243 (KQILLYSLILFPICLSPVLTG), 244 to 264 (LGGPIYLAVSGLGGLVFLLLA), and 303 to 323 (LFAFSILYLFALFAALLGEAV).

Belongs to the UbiA prenyltransferase family. Protoheme IX farnesyltransferase subfamily.

The protein localises to the cell inner membrane. The catalysed reaction is heme b + (2E,6E)-farnesyl diphosphate + H2O = Fe(II)-heme o + diphosphate. Its pathway is porphyrin-containing compound metabolism; heme O biosynthesis; heme O from protoheme: step 1/1. Its function is as follows. Converts heme B (protoheme IX) to heme O by substitution of the vinyl group on carbon 2 of heme B porphyrin ring with a hydroxyethyl farnesyl side group. This is Protoheme IX farnesyltransferase from Caulobacter vibrioides (strain ATCC 19089 / CIP 103742 / CB 15) (Caulobacter crescentus).